The sequence spans 137 residues: Small ribosomal subunit protein uS9 (137 aa).

A disordered region spans residues 114–137; sequence DSRMKERKKPGLRGARRGVQFSKR. Positions 118-137 are enriched in basic residues; the sequence is KERKKPGLRGARRGVQFSKR.

The protein belongs to the universal ribosomal protein uS9 family.

The sequence is that of Small ribosomal subunit protein uS9 from Rhodopirellula baltica (strain DSM 10527 / NCIMB 13988 / SH1).